The following is a 135-amino-acid chain: Small ribosomal subunit protein uS9 (135 aa).

Positions 108 to 118 are enriched in basic and acidic residues; the sequence is VGDPRRTEPHK. A disordered region spans residues 108–135; it reads VGDPRRTEPHKPNRSTKGPRAKRQKSYR. Residues 119-135 show a composition bias toward basic residues; the sequence is PNRSTKGPRAKRQKSYR.

Belongs to the universal ribosomal protein uS9 family.

The sequence is that of Small ribosomal subunit protein uS9 (rps9) from Pyrococcus abyssi (strain GE5 / Orsay).